Reading from the N-terminus, the 463-residue chain is Glutamate--tRNA ligase 2 (463 aa).

The 'HIGH' region motif lies at 10–20 (PSPTGFLHIGS). Residues 239–243 (KLSKR) carry the 'KMSKS' region motif. Lysine 242 contacts ATP.

The protein belongs to the class-I aminoacyl-tRNA synthetase family. Glutamate--tRNA ligase type 1 subfamily. As to quaternary structure, monomer.

The protein localises to the cytoplasm. It catalyses the reaction tRNA(Glu) + L-glutamate + ATP = L-glutamyl-tRNA(Glu) + AMP + diphosphate. In terms of biological role, catalyzes the attachment of glutamate to tRNA(Glu) in a two-step reaction: glutamate is first activated by ATP to form Glu-AMP and then transferred to the acceptor end of tRNA(Glu). This is Glutamate--tRNA ligase 2 from Rickettsia felis (strain ATCC VR-1525 / URRWXCal2) (Rickettsia azadi).